An 83-amino-acid polypeptide reads, in one-letter code: UPF0147 protein TK2131 (83 aa).

Belongs to the UPF0147 family.

The chain is UPF0147 protein TK2131 from Thermococcus kodakarensis (strain ATCC BAA-918 / JCM 12380 / KOD1) (Pyrococcus kodakaraensis (strain KOD1)).